A 519-amino-acid polypeptide reads, in one-letter code: MDLVGVASPEPGTAAAWGPSKCPWAIPQNTISCSLADVMSEQLAKELQLEEEAAVFPEVAVAEGPFITGENIDTSSDLMLAQMLQMEYDREYDAQLRREEKKFNGDSKVSISFENYRKVHPYEDSDSSEDEVDWQDTRDDPYRPAKPVPTPKKGFIGKGKDITTKHDEVVCGRKNTARMENFAPEFQVGDGIGMDLKLSNHVFNALKQHAYSEERRSARLHEKKEHSTAEKAVDPKTRLLMYKMVNSGMLETITGCISTGKESVVFHAYGGSMEDEKEDSKVIPTECAIKVFKTTLNEFKNRDKYIKDDFRFKDRFSKLNPRKIIRMWAEKEMHNLARMQRAGIPCPTVVLLKKHILVMSFIGHDQVPAPKLKEVKLNSEEMKEAYYQTLHLMRQLYHECTLVHADLSEYNMLWHAGKVWLIDVSQSVEPTHPHGLEFLFRDCRNVSQFFQKGGVKEALSERELFNAVSGLNITADNEADFLAEIEALEKMNEDHVQKNGRKAASFLKDDGDPPLLYDE.

Phosphoserine occurs at positions 8 and 112. The disordered stretch occupies residues 121-159; the sequence is PYEDSDSSEDEVDWQDTRDDPYRPAKPVPTPKKGFIGKG. A Phosphotyrosine modification is found at Tyr-122. Residues 124-134 show a composition bias toward acidic residues; the sequence is DSDSSEDEVDW. Residues Ser-125, Ser-127, and Ser-128 each carry the phosphoserine modification. The Protein kinase domain occupies 251-519; that stretch reads ETITGCISTG…DGDPPLLYDE (269 aa). ATP-binding positions include 257 to 265 and Lys-290; that span reads ISTGKESVV. Asp-406 acts as the Proton acceptor in catalysis.

The protein belongs to the protein kinase superfamily. RIO-type Ser/Thr kinase family. Interacts with CASP10. Interacts with IRF3; RIOK3 probably mediates the interaction of TBK1 with IRF3. Associated with 40S pre-ribosomal particles. It depends on Mg(2+) as a cofactor. In terms of processing, autophosphorylated (in vitro). In terms of tissue distribution, widely expressed.

The protein resides in the cytoplasm. The enzyme catalyses L-seryl-[protein] + ATP = O-phospho-L-seryl-[protein] + ADP + H(+). The catalysed reaction is L-threonyl-[protein] + ATP = O-phospho-L-threonyl-[protein] + ADP + H(+). Functionally, involved in regulation of type I interferon (IFN)-dependent immune response which plays a critical role in the innate immune response against DNA and RNA viruses. May act as an adapter protein essential for the recruitment of TBK1 to IRF3. Phosphorylates IFIH1 on 'Ser-828' interfering with IFIH1 filament assembly on long dsRNA and resulting in attenuated IFIH1-signaling. Can inhibit CASP10 isoform 7-mediated activation of the NF-kappaB signaling pathway. May play a role in the biogenesis of the 40S ribosomal subunit. Involved in the processing of 21S pre-rRNA to the mature 18S rRNA. This is Serine/threonine-protein kinase RIO3 (RIOK3) from Homo sapiens (Human).